Reading from the N-terminus, the 243-residue chain is Tegument protein UL14 homolog (243 aa).

Belongs to the alphaherpesvirinae HHV-1 UL14 protein family. Phosphorylated.

The protein localises to the virion tegument. It is found in the host cytoplasm. It localises to the host nucleus. Functionally, contributes to the nuclear transport of the viral transcriptional activator VP16 homolog during the early phase of infection. Therefore, participates indirectly in the regulation of the immediate-early gene expression. Additionally, seems to be important for efficient nuclear targeting of capsids. The polypeptide is Tegument protein UL14 homolog (MDV026) (Gallid herpesvirus 2 (strain Chicken/Md5/ATCC VR-987) (GaHV-2)).